The primary structure comprises 97 residues: Apolipoprotein C-II (97 aa).

A signal peptide spans 1-22; the sequence is MGSRFFLALFLVILMLGNEVQG. Positions 63-71 are lipid binding; that stretch reads SMDEKLRDM. The segment at 75-97 is lipoprotein lipase cofactor; that stretch reads SSAAMSTYAGIFTDQLLTLLRGE.

This sequence belongs to the apolipoprotein C2 family. As to expression, adult and fetal liver, intestine and peritoneal macrophages.

It is found in the secreted. Functionally, component of chylomicrons, very low-density lipoproteins (VLDL), low-density lipoproteins (LDL), and high-density lipoproteins (HDL) in plasma. Plays an important role in lipoprotein metabolism as an activator of lipoprotein lipase. This chain is Apolipoprotein C-II (Apoc2), found in Mus musculus (Mouse).